A 227-amino-acid polypeptide reads, in one-letter code: AN1-type zinc finger protein 3 (227 aa).

Residues 12–44 form an A20-type zinc finger; it reads PSLPPRCPCGFWGSSKTMNLCSKCFADFQKKQP. Residues Cys-18, Cys-20, Cys-32, and Cys-35 each contribute to the Zn(2+) site. 2 disordered regions span residues 41-100 and 113-148; these read KKQP…EECG and PTKRSCGTDSQSENEASPVKRPRLLENTERSEETSR. Residues 49–59 are compositionally biased toward polar residues; the sequence is APSTSNSQSDL. Residues 66 to 77 are compositionally biased toward low complexity; sequence SDNNNTSITTPT. Polar residues-rich tracts occupy residues 78–94 and 113–127; these read LSPSQQPLPTELNVTSP and PTKRSCGTDSQSENE. Residues 135 to 148 show a composition bias toward basic and acidic residues; it reads RLLENTERSEETSR. Residues 151 to 200 form an AN1-type zinc finger; sequence QKSRRRCFQCQTKLELVQQELGSCRCGYVFCMLHRLPEQHDCTFDHMGRG. Cys-157, Cys-160, Cys-174, Cys-176, Cys-181, His-184, His-190, and Cys-192 together coordinate Zn(2+).

The protein is AN1-type zinc finger protein 3 (ZFAND3) of Homo sapiens (Human).